The chain runs to 143 residues: MGKCRGLRTARKLRNHRREQKWHDKQYKKAHLGTALKANPFGSASHAKGIVLEKVGVEAKQPNSAIRKCVRVQLIKNGKKITAFVPNDGCLNFXEENDEVLVAGFGRKXHAVGDIPGVRFKVVEMANVSLLALYKGXKERPKS.

Belongs to the universal ribosomal protein uS12 family. As to quaternary structure, component of the 40S small ribosomal subunit.

Its subcellular location is the cytoplasm. The protein localises to the cytosol. It localises to the rough endoplasmic reticulum. The protein is Small ribosomal subunit protein uS12 (rps23) of Gillichthys mirabilis (Long-jawed mudsucker).